Reading from the N-terminus, the 188-residue chain is Peptidyl-tRNA hydrolase (188 aa).

Y14 contributes to the tRNA binding site. H19 (proton acceptor) is an active-site residue. The tRNA site is built by Y60 and N62.

This sequence belongs to the PTH family. As to quaternary structure, monomer.

The protein resides in the cytoplasm. It carries out the reaction an N-acyl-L-alpha-aminoacyl-tRNA + H2O = an N-acyl-L-amino acid + a tRNA + H(+). In terms of biological role, hydrolyzes ribosome-free peptidyl-tRNAs (with 1 or more amino acids incorporated), which drop off the ribosome during protein synthesis, or as a result of ribosome stalling. Catalyzes the release of premature peptidyl moieties from peptidyl-tRNA molecules trapped in stalled 50S ribosomal subunits, and thus maintains levels of free tRNAs and 50S ribosomes. This chain is Peptidyl-tRNA hydrolase, found in Mycoplasmopsis agalactiae (strain NCTC 10123 / CIP 59.7 / PG2) (Mycoplasma agalactiae).